The primary structure comprises 256 residues: Thiazole synthase (256 aa).

Lys95 (schiff-base intermediate with DXP) is an active-site residue. 1-deoxy-D-xylulose 5-phosphate contacts are provided by residues Gly156, 182 to 183 (AG), and 204 to 205 (NT).

This sequence belongs to the ThiG family. As to quaternary structure, homotetramer. Forms heterodimers with either ThiH or ThiS.

Its subcellular location is the cytoplasm. It carries out the reaction [ThiS sulfur-carrier protein]-C-terminal-Gly-aminoethanethioate + 2-iminoacetate + 1-deoxy-D-xylulose 5-phosphate = [ThiS sulfur-carrier protein]-C-terminal Gly-Gly + 2-[(2R,5Z)-2-carboxy-4-methylthiazol-5(2H)-ylidene]ethyl phosphate + 2 H2O + H(+). It functions in the pathway cofactor biosynthesis; thiamine diphosphate biosynthesis. Its function is as follows. Catalyzes the rearrangement of 1-deoxy-D-xylulose 5-phosphate (DXP) to produce the thiazole phosphate moiety of thiamine. Sulfur is provided by the thiocarboxylate moiety of the carrier protein ThiS. In vitro, sulfur can be provided by H(2)S. The protein is Thiazole synthase of Escherichia fergusonii (strain ATCC 35469 / DSM 13698 / CCUG 18766 / IAM 14443 / JCM 21226 / LMG 7866 / NBRC 102419 / NCTC 12128 / CDC 0568-73).